Consider the following 181-residue polypeptide: Ferritin BfrB (181 aa).

The region spanning 15–150 (MQEQIHNEFT…TLVRVADRAG (136 aa)) is the Ferritin-like diiron domain. Residues Glu22, Glu55, His58, Glu99, and Gln132 each coordinate Fe cation.

Belongs to the ferritin family. Prokaryotic subfamily. Homooligomer of 24 subunits that are packed together to form an approximately spherical molecule with a central cavity, in which large amounts of iron can be stored.

It carries out the reaction 4 Fe(2+) + O2 + 4 H(+) = 4 Fe(3+) + 2 H2O. Iron-storage protein that displays ferroxidase activity, catalyzing the oxidation of Fe(2+) ions into Fe(3+) ions, that can then be deposited as a ferric-oxide mineral core within the central cavity of the protein complex. The polypeptide is Ferritin BfrB (bfrB) (Mycobacterium tuberculosis (strain ATCC 35801 / TMC 107 / Erdman)).